Consider the following 336-residue polypeptide: Glycerol-3-phosphate dehydrogenase [NAD(P)+] (336 aa).

NADPH-binding residues include Ser16, Tyr17, His37, and Lys111. 3 residues coordinate sn-glycerol 3-phosphate: Lys111, Gly140, and Thr142. Ala144 provides a ligand contact to NADPH. Sn-glycerol 3-phosphate-binding residues include Lys196, Asp249, Ser259, Arg260, and Asn261. The Proton acceptor role is filled by Lys196. Arg260 contributes to the NADPH binding site. NADPH is bound by residues Val284 and Glu286.

Belongs to the NAD-dependent glycerol-3-phosphate dehydrogenase family.

It localises to the cytoplasm. The enzyme catalyses sn-glycerol 3-phosphate + NAD(+) = dihydroxyacetone phosphate + NADH + H(+). It catalyses the reaction sn-glycerol 3-phosphate + NADP(+) = dihydroxyacetone phosphate + NADPH + H(+). It functions in the pathway membrane lipid metabolism; glycerophospholipid metabolism. Functionally, catalyzes the reduction of the glycolytic intermediate dihydroxyacetone phosphate (DHAP) to sn-glycerol 3-phosphate (G3P), the key precursor for phospholipid synthesis. This chain is Glycerol-3-phosphate dehydrogenase [NAD(P)+], found in Actinobacillus pleuropneumoniae serotype 5b (strain L20).